A 1442-amino-acid polypeptide reads, in one-letter code: CD109 antigen (1442 aa).

The N-terminal stretch at 1 to 21 (MRSRRLLSAAHLLCLCAVALA) is a signal peptide. N67, N117, N246, N278, N370, and N421 each carry an N-linked (GlcNAc...) asparagine glycan. Residues 595–704 (DKSVTLMENS…TWIWLDAYMG (110 aa)) form a bait region (approximate) region. Positions 923–926 (CGEQ) form a cross-link, isoglutamyl cysteine thioester (Cys-Gln). An N-linked (GlcNAc...) asparagine glycan is attached at N1088. A lipid anchor (GPI-anchor amidated alanine) is attached at A1419. Residues 1420 to 1442 (TDSLRRSSSLLVFCSVLLYFVQH) constitute a propeptide, removed in mature form.

Belongs to the protease inhibitor I39 (alpha-2-macroglobulin) family. Heterodimer; disulfide-linked. Interacts with TGFB1 and TGFBR1. Forms a heteromeric complex with TGFBR1, TGFBR2 and TGFBR3 in a ligand-independent manner. In terms of processing, N-glycosylated. 2 forms of 150 (p150) and 120 kDa (p120) exist due to proteolytic degradation from a 180 kDa form.

Its subcellular location is the cell membrane. Modulates negatively TGFB1 signaling in keratinocytes. The polypeptide is CD109 antigen (Cd109) (Mus musculus (Mouse)).